The sequence spans 552 residues: Glutamine--tRNA ligase (552 aa).

Positions 33-43 (PEPNGYLHIGH) match the 'HIGH' region motif. Residues 34–36 (EPN) and 40–46 (HIGHAKS) each bind ATP. The L-glutamine site is built by Asp-66 and Tyr-210. ATP contacts are provided by residues Thr-229, 259 to 260 (RL), and 267 to 269 (MSK). The 'KMSKS' region motif lies at 266 to 270 (VMSKR).

This sequence belongs to the class-I aminoacyl-tRNA synthetase family. As to quaternary structure, monomer.

The protein resides in the cytoplasm. It catalyses the reaction tRNA(Gln) + L-glutamine + ATP = L-glutaminyl-tRNA(Gln) + AMP + diphosphate. The polypeptide is Glutamine--tRNA ligase (Clostridium perfringens (strain ATCC 13124 / DSM 756 / JCM 1290 / NCIMB 6125 / NCTC 8237 / Type A)).